Consider the following 313-residue polypeptide: Ribosomal RNA small subunit methyltransferase H (313 aa).

Residues 35–37 (GGH), aspartate 55, phenylalanine 81, aspartate 103, and glutamine 110 each bind S-adenosyl-L-methionine.

Belongs to the methyltransferase superfamily. RsmH family.

It is found in the cytoplasm. The catalysed reaction is cytidine(1402) in 16S rRNA + S-adenosyl-L-methionine = N(4)-methylcytidine(1402) in 16S rRNA + S-adenosyl-L-homocysteine + H(+). Its function is as follows. Specifically methylates the N4 position of cytidine in position 1402 (C1402) of 16S rRNA. The protein is Ribosomal RNA small subunit methyltransferase H of Pseudomonas aeruginosa (strain UCBPP-PA14).